Reading from the N-terminus, the 891-residue chain is MSGVNDIRSAFLNYFAANGHQIVPSSPLVPRNDPTLMFTNAGMVQFKNVFTGVEKRPYQRATTSQKCVRAGGKHNDLDNVGYTARHHTFFEMLGNFSFGDYFKDRAIELAWKLVTQEFGLPKDRLTATVYIDDDGAFDLWKKIAGLPESRIIRIAGSDNFWQMGDTGPCGPCSEIFYDHGDRIPGGPPGSPEQDGDRFVEIWNLVFMQYEKLPDGSRPNLPKPSIDTGAGLERVAAVLQGKHDNYDIDLFVALIRAAADLTGADPQGPMKASLRVIADHLRASSFLIADGVLPSNEGRGYVLRRIMRRAMRHAQLLGAREPLMWRLVGVLVREMGEAFPELQRARPLIEETLRLEETRFRKTLERGLSILDEKSASLKQGDMFDGETAFTLYDTYGFPLDLTQDALRARGIGVDLASFTDAMEQQKAKARASWSGSGEAAAESIWFPLREKLGATEFLGYETEAAEGVVAALVKDGEEADTLKAGESGAIVLNQTPFYGESGGQVGDTGFLIADGVRFRVTDTQKKAGDLFVHLGTVEQGVLAPGMALALEVDHDRRSAIRANHSATHLLHEALRQVLGDHIAQRGSLVAPERLRFDFAHNKPISADELRCIEDIANDVVLENGEVTTRLMAVDDAREAGARALFGEKYGDEVRVVSMGGTDRHGAASNALGWSVELCGGTHVKRTGDIGLISVVGESAVASGVRRIEALTGHQARHHANHAIQLAKTAAGELRTSLDDMPARIASLMEERKKLERELSEARKKLAMGGAASASSGATTGVRDVGGIKLMARSVEGIEIKDLKSLADQGKKQLGSGVVALVATSGDGKASVVVGVTPDLVTRFSAVDLVRKASEVLGGKGGGGKPDMAQAGGPDGAKAGAALDAIAAAMGA.

Residues His564, His568, Cys678, and His682 each contribute to the Zn(2+) site.

This sequence belongs to the class-II aminoacyl-tRNA synthetase family. Zn(2+) is required as a cofactor.

Its subcellular location is the cytoplasm. It carries out the reaction tRNA(Ala) + L-alanine + ATP = L-alanyl-tRNA(Ala) + AMP + diphosphate. Catalyzes the attachment of alanine to tRNA(Ala) in a two-step reaction: alanine is first activated by ATP to form Ala-AMP and then transferred to the acceptor end of tRNA(Ala). Also edits incorrectly charged Ser-tRNA(Ala) and Gly-tRNA(Ala) via its editing domain. This chain is Alanine--tRNA ligase, found in Nitrobacter winogradskyi (strain ATCC 25391 / DSM 10237 / CIP 104748 / NCIMB 11846 / Nb-255).